Consider the following 968-residue polypeptide: MAKVRVHELAKELGITSKDAVTKLQELGEFVRSASSTIEAPVVRKLRNAYPAAGASKSEAPAAAPKAPASPAATRPAPAPGPAAPKAPEPKAEAPAAASAPSAPAPAAPAPAAPAAAASAPSAPAPAAPSTGAKPGARPAPKAEAPAAPARSGGQGSAPRPGGPRPGNNPFATSQGMPRGRGGDNERPPRPGNNPFAPSQGMPRPGGSRTEGERPGGPRPAAGAGGPRPGAPRPGGTQGARPGAPRPAGAPGARPGAGGGNRPTPGMMPNRTERPAPAGAGRPGGGGRGPGRPGGAPGTGGAPGAGGGAPAGGGFGKGGRGRGGTQGAFGKGGAGRGKQRKSKRAKRQELEQMSAPSLGGVSVPRGDGNTVVRLRRGSSITDFADKIEANPAALVTVLFHLGEMATATQSLDEETFALLGEELGYKLQVVSPEDEERELLSGFDIDFDAELEAEGDEELEARPPVVTVMGHVDHGKTRLLDAIRNSDVVAGEHGGITQHIGAYQITTEHEGAERKITFIDTPGHEAFTAMRARGAKVTDIAILVVAADDGVMPQTVEALNHAQAANVPIVVAVNKIDKEGANPDKVRGQLTEYGLVPEEYGGDTMFVEVSARQNLNIDELLEAVLLTADAALDMRANPNKDARGIAIEANLDKGRGAVATVLVQSGTLHVGDTIVAGTAHGRVRAMFDDDGSVLTEAGPSRPVQVLGLSNVPRAGDTFFVTADERTARQIAEKREAADRNAALAKRRKRISLEDFDQAVAEGKIDTLNLILKGDVSGAVEALEDALLKIDVGEGVQLRVIHRGVGAITQNDVNLATVDSAVIIGFNVKPAERVAELADREGVDMRFYSVIYAAIDDIEMALKGMLKPEYEEVQLGTAEVREVFRSSKFGNIAGSIVRSGVIRRNSKARISRDGKIIGDNLTVETLKRFKDDATEVRTDFECGIGLGSYNDINEGDIIETFEMREKPRV.

Over residues 51–76 (PAAGASKSEAPAAAPKAPASPAATRP) the composition is skewed to low complexity. The disordered stretch occupies residues 51-369 (PAAGASKSEA…GVSVPRGDGN (319 aa)). The span at 77–87 (APAPGPAAPKA) shows a compositional bias: pro residues. Low complexity predominate over residues 93-102 (EAPAAASAPS). Positions 103-112 (APAPAAPAPA) are enriched in pro residues. Composition is skewed to low complexity over residues 113–122 (APAAAASAPS), 128–170 (APST…GNNP), and 239–254 (GARP…PGAR). A compositionally biased stretch (gly residues) spans 281-336 (GRPGGGGRGPGRPGGAPGTGGAPGAGGGAPAGGGFGKGGRGRGGTQGAFGKGGAGR). A compositionally biased stretch (basic residues) spans 337–346 (GKQRKSKRAK). Residues 461-632 (ARPPVVTVMG…AVLLTADAAL (172 aa)) form the tr-type G domain. Residues 470-477 (GHVDHGKT) form a G1 region. 470–477 (GHVDHGKT) contributes to the GTP binding site. Residues 495–499 (GITQH) form a G2 region. Residues 520-523 (DTPG) form a G3 region. GTP contacts are provided by residues 520 to 524 (DTPGH) and 574 to 577 (NKID). The G4 stretch occupies residues 574–577 (NKID). Residues 610–612 (SAR) are G5.

It belongs to the TRAFAC class translation factor GTPase superfamily. Classic translation factor GTPase family. IF-2 subfamily.

Its subcellular location is the cytoplasm. Its function is as follows. One of the essential components for the initiation of protein synthesis. Protects formylmethionyl-tRNA from spontaneous hydrolysis and promotes its binding to the 30S ribosomal subunits. Also involved in the hydrolysis of GTP during the formation of the 70S ribosomal complex. The chain is Translation initiation factor IF-2 from Arthrobacter sp. (strain FB24).